We begin with the raw amino-acid sequence, 180 residues long: Chromatin structure-remodeling complex protein RSC14 (180 aa).

Interacts with STH1, RSC3 and ARP9. Component of the two forms of the RSC complex composed of at least either RSC1 or RSC2, and ARP7, ARP9, LDB7, NPL6, RSC3, RSC30, RSC4, RSC58, RSC6, RSC8, RSC9, SFH1, STH1, HTL1 and probably RTT102. The complexes interact with histone and histone variant components of centromeric chromatin. Component of a fungal-specific module (HTL1-LDB7-NPL6-RSC3-RSC30) within the RSC complex.

The protein localises to the nucleus. In terms of biological role, component of the chromatin structure-remodeling complex (RSC), which is involved in transcription regulation and nucleosome positioning. RSC is responsible for the transfer of a histone octamer from a nucleosome core particle to naked DNA. The reaction requires ATP and involves an activated RSC-nucleosome intermediate. Remodeling reaction also involves DNA translocation, DNA twist and conformational change. As a reconfigurer of centromeric and flanking nucleosomes, RSC complex is required both for proper kinetochore function in chromosome segregation and, via a PKC1-dependent signaling pathway, for organization of the cellular cytoskeleton. Together with HTL1, NPL6, RSC3, RSC30 components, defines a fungal-specific module within the RSC complex that plays a role in many cellular functions including the maintenance of cell wall integrity. May be involved in the transfer of mannosylphosphate (MP) groups into N-linked oligosaccharides. In Saccharomyces cerevisiae (strain ATCC 204508 / S288c) (Baker's yeast), this protein is Chromatin structure-remodeling complex protein RSC14 (LDB7).